Consider the following 695-residue polypeptide: Potassium voltage-gated channel subfamily KQT member 4 (695 aa).

The segment at 1–21 (MAEAPPRRLGLGPPPGDAPRA) is disordered. Topologically, residues 1–96 (MAEAPPRRLG…VYNVLERPRG (96 aa)) are cytoplasmic. A 1,2-diacyl-sn-glycero-3-phospho-(1D-myo-inositol-4,5-bisphosphate) is bound at residue Arg-93. Residues 97-118 (WAFVYHVFIFLLVFSCLVLSVL) traverse the membrane as a helical segment. Residues 119-129 (STIQEHQELAN) are Extracellular-facing. The helical transmembrane segment at 130 to 152 (ECLLILEFVMIVVFGLEYIIRVW) threads the bilayer. The Cytoplasmic portion of the chain corresponds to 153–168 (SAGCCCRYRGWQGRFR). A helical transmembrane segment spans residues 169 to 191 (FARKPFCVIDFIVFVASVAVIAA). Lys-172 contacts a 1,2-diacyl-sn-glycero-3-phospho-(1D-myo-inositol-4,5-bisphosphate). Residues 192–202 (GTQGNIFATSA) are Extracellular-facing. Residues 203 to 223 (LRSMRFLQILRMVRMDRRGGT) form a helical; Voltage-sensor membrane-spanning segment. 4 residues coordinate a 1,2-diacyl-sn-glycero-3-phospho-(1D-myo-inositol-4,5-bisphosphate): Arg-219, Arg-220, Lys-225, and Ser-235. The Cytoplasmic segment spans residues 224–235 (WKLLGSVVYAHS). Residues 236–258 (KELITAWYIGFLVLIFASFLVYL) form a helical membrane-spanning segment. The Extracellular segment spans residues 259–270 (AEKDANSDFSSY). The segment at residues 271-292 (ADSLWWGTITLTTIGYGDKTPH) is an intramembrane region (pore-forming). Position 293 (Thr-293) is a topological domain, extracellular. A helical transmembrane segment spans residues 294–322 (WLGRVLAAGFALLGISFFALPAGILGSGF). Residues 323-695 (ALKVQEQHRQ…ISRSVSTNMD (373 aa)) are Cytoplasmic-facing. Residues His-330 and Lys-333 each coordinate a 1,2-diacyl-sn-glycero-3-phospho-(1D-myo-inositol-4,5-bisphosphate). The tract at residues 342 to 351 (AANLIQAAWR) is interaction with CALM. The tract at residues 441–483 (RMSSSQKRTGPSKQHLAPPPIPTSPSSEQVGEASSPSKVQKSW) is disordered. 2 stretches are compositionally biased toward polar residues: residues 442–452 (MSSSQKRTGPS) and 464–483 (SPSSEQVGEASSPSKVQKSW). Residues 535-549 (RSVRILKFLVAKRKF) are interaction with CALM. A C-terminal assembly domain (tetramerization) region spans residues 546–650 (KRKFKETLRP…SRCLRSGTSA (105 aa)). Positions 588 to 608 (GRGPGDRKTREKGDKGPSDTE) are disordered. Residues 591–605 (PGDRKTREKGDKGPS) show a composition bias toward basic and acidic residues.

It belongs to the potassium channel family. KQT (TC 1.A.1.15) subfamily. Kv7.4/KCNQ4 sub-subfamily. In terms of assembly, homotetramer. Interacts (via C-terminus) with calmodulin; forms a heterooctameric structure (with 4:4 KCNQ1:CALM stoichiometry); the interaction is calcium-independent, constitutive, participates in the proper assembly of a functional channel. The interaction with calcium-free CALM controls channel trafficking whereas interaction with calcium-bound CALM regulates channel gating. May form a functional heteromultimeric channel with KCNQ3. Interacts with HSP90AB1; promotes cell surface expression of KCNQ4. As to expression, expressed in both the inner (IHCs) and the outer hair cells (OHCs) of the cochlea. Reciprocal longitudinal gradients of expression is present in IHCs and OHCs. The strongest expression in IHCs is in the base of the cochlea and in the apex for OHCs. A basal to apical gradient of expression is also present in both type I and type II spiral ganglion cells.

Its subcellular location is the basal cell membrane. It catalyses the reaction K(+)(in) = K(+)(out). Its activity is regulated as follows. Two molecules of phosphatidylinositol-4,5-bisphosphate (PIP2-I and PIP2-II) are essential to activate KCNQ4 channel by inducing the coupling of the voltage-sensing domain (VSD) and the pore-forming domain (PD). Upon channel activation, PIP2-I and PIP2-II disrupt the VSD-calmodulin/CALM interaction, causing the release of CALM from the VSD which triggers the opening of the gate. Calcium suppresses KCNQ4 channel current through calcium-bound CALM C-terminus. Therefore CALM acts as calcium sensor that controls channel activity. Pore-forming subunit of the voltage-gated potassium (Kv) channel involved in the regulation of sensory cells excitability in the cochlea. KCNQ4/Kv7.4 channel is composed of 4 pore-forming subunits assembled as tetramers. Promotes the outflow of potassium ions in the repolarization phase of action potential which plays a role in regulating membrane potential of excitable cells. The channel conducts a slowly activating and deactivating current. Current often shows some inward rectification at positive potentials. Channel may be selectively permeable in vitro to other cations besides potassium, in decreasing order of affinity K(+) = Rb(+) &gt; Cs(+) &gt; Na(+). Important for normal physiological function of inner ear such as sensory perception of sound. The sequence is that of Potassium voltage-gated channel subfamily KQT member 4 from Rattus norvegicus (Rat).